Here is a 123-residue protein sequence, read N- to C-terminus: ATP synthase epsilon chain (123 aa).

This sequence belongs to the ATPase epsilon chain family. As to quaternary structure, F-type ATPases have 2 components, CF(1) - the catalytic core - and CF(0) - the membrane proton channel. CF(1) has five subunits: alpha(3), beta(3), gamma(1), delta(1), epsilon(1). CF(0) has three main subunits: a, b and c.

The protein localises to the cell inner membrane. Produces ATP from ADP in the presence of a proton gradient across the membrane. This Helicobacter pylori (strain Shi470) protein is ATP synthase epsilon chain.